Reading from the N-terminus, the 360-residue chain is MNIYDQLQAVEDRYEELGELLSDPEVVSDTKRFMALSKEEASTRETVAAYRQYKAIIQSIDDAEEMIKEAGGDPDIEEMAKEELKEAKSAKEAYEDKLKLLLLPKDPNDDKNIILEIRGAAGGDEAALFAGDLLAMYQKFAESQGWRFEVMEASYNGVGGIKEVVAMVSGQSVYSKLKYESGAHRVQRVPVTESQGRVHTSTATVLVMPEVEEVEYDIDPKDLRIDIYHASGAGGQNVNKVATAVRIVHLPTNIKVEMQEERTQQKNRDKAMKIIRARVADHFAQIAQDEQDAERKSTIGTGDRSERIRTYNFPQNRVTDHRIGLTLQKLDTILSGKLDEIVDALVLYDQTQKLESLNNQ.

Residue Gln-236 is modified to N5-methylglutamine. The segment at 288-308 is disordered; it reads QDEQDAERKSTIGTGDRSERI. A compositionally biased stretch (basic and acidic residues) spans 293-308; it reads AERKSTIGTGDRSERI.

It belongs to the prokaryotic/mitochondrial release factor family. In terms of processing, methylated by PrmC. Methylation increases the termination efficiency of RF1.

It localises to the cytoplasm. Its function is as follows. Peptide chain release factor 1 directs the termination of translation in response to the peptide chain termination codons UAG and UAA. The chain is Peptide chain release factor 1 from Streptococcus equi subsp. equi (strain 4047).